A 369-amino-acid chain; its full sequence is Arsenite methyltransferase (369 aa).

S46 carries the phosphoserine modification.

Belongs to the methyltransferase superfamily. Arsenite methyltransferase family.

It localises to the cytoplasm. It is found in the cytosol. The catalysed reaction is arsenic triglutathione + [thioredoxin]-dithiol + S-adenosyl-L-methionine + 2 H2O = methylarsonous acid + [thioredoxin]-disulfide + 3 glutathione + S-adenosyl-L-homocysteine + H(+). It carries out the reaction arsenic triglutathione + 2 [thioredoxin]-dithiol + 2 S-adenosyl-L-methionine + H2O = dimethylarsinous acid + 2 [thioredoxin]-disulfide + 3 glutathione + 2 S-adenosyl-L-homocysteine + 2 H(+). The enzyme catalyses arsenic triglutathione + 3 [thioredoxin]-dithiol + 3 S-adenosyl-L-methionine = trimethylarsine + 3 [thioredoxin]-disulfide + 3 glutathione + 3 S-adenosyl-L-homocysteine + 3 H(+). In terms of biological role, catalyzes the transfer of a methyl group from AdoMet to trivalent arsenicals producing methylated and dimethylated arsenicals. It methylates arsenite to form methylarsonate, Me-AsO(3)H(2), which is reduced by methylarsonate reductase to methylarsonite, Me-As(OH)2. Methylarsonite is also a substrate and it is converted into the much less toxic compound dimethylarsinate (cacodylate), Me(2)As(O)-OH. This is Arsenite methyltransferase (As3mt) from Rattus norvegicus (Rat).